Reading from the N-terminus, the 3433-residue chain is Genome polyprotein (3433 aa).

The interaction with host EXOC1 stretch occupies residues 2–15 (SKKPGGPGKSRAVN). Over 2-105 (SKKPGGPGKS…NRRSSKQKKR (104 aa)) the chain is Cytoplasmic. The segment at 37 to 72 (LIDGRGPTRFVLALLAFFRFTAIAPTRAVLDRWRSV) is hydrophobic; homodimerization of capsid protein C. The propeptide at 106-123 (GGKTGIAFMIGLIAGVGA) is ER anchor for the capsid protein C, removed in mature form by serine protease NS3. Residues 106 to 126 (GGKTGIAFMIGLIAGVGAVTL) form a helical membrane-spanning segment. At 127–248 (SNFQGKVMMT…KATRYLVKTE (122 aa)) the chain is on the extracellular side. N-linked (GlcNAc...) asparagine; by host glycosylation occurs at Asn138. Residues 249 to 269 (SWILRNPGYALVAAVIGWMLG) traverse the membrane as a helical segment. Residues 270-273 (SNTM) are Cytoplasmic-facing. Residues 274 to 290 (QRVVFAVLLLLVAPAYS) traverse the membrane as a helical segment. Topologically, residues 291–743 (FNCLGMSNRD…QVFGGAFRSL (453 aa)) are extracellular. Cystine bridges form between Cys293–Cys320, Cys350–Cys406, Cys364–Cys395, and Cys382–Cys411. A fusion peptide region spans residues 388–401 (DRGWGNGCGLFGKG). Asn444 carries an N-linked (GlcNAc...) asparagine; by host glycan. 2 disulfides stabilise this stretch: Cys480-Cys578 and Cys595-Cys626. A helical membrane pass occupies residues 744–764 (FGGMSWITQGLLGALLLWMGI). The Cytoplasmic segment spans residues 765–770 (NARDRS). A helical transmembrane segment spans residues 771-791 (IALTFLAVGGVLLFLSVNVHA). At 792 to 1216 (DTGCAIDISR…AFAESNSGGD (425 aa)) the chain is on the extracellular side. 2 cysteine pairs are disulfide-bonded: Cys795–Cys806 and Cys846–Cys934. Asn921, Asn966, and Asn998 each carry an N-linked (GlcNAc...) asparagine; by host glycan. 4 cysteine pairs are disulfide-bonded: Cys970-Cys1014, Cys1071-Cys1120, Cys1082-Cys1103, and Cys1104-Cys1107. The helical transmembrane segment at 1217 to 1237 (VVHLALMATFKIQPVFMVASF) threads the bilayer. The Cytoplasmic segment spans residues 1238–1247 (LKARWTNQEN). A helical transmembrane segment spans residues 1248 to 1268 (ILLMLAAAFFQMAYYDARQIL). Residues 1269 to 1288 (LWEMPDVLNSLAVAWMILRA) lie on the Lumenal side of the membrane. A helical membrane pass occupies residues 1289-1309 (ITFTTTSNVVVPLLALLTPGL). At 1310-1316 (RCLNLDV) the chain is on the cytoplasmic side. A helical membrane pass occupies residues 1317–1335 (YRILLLMVGIGSLIREKRS). The Lumenal portion of the chain corresponds to 1336 to 1345 (AAAKKKGASL). Residues 1346–1366 (LCLALASTGFFNPMILAAGLV) form a helical membrane-spanning segment. The Cytoplasmic portion of the chain corresponds to 1367–1375 (ACDPNRKRG). Residues 1376–1396 (WPATEVMTAVGLMFAIVGGLA) form a helical membrane-spanning segment. Over 1397 to 1399 (ELD) the chain is Lumenal. A helical membrane pass occupies residues 1400–1420 (IDSMAIPMTIAGLMFAAFVIS). Residues 1421–1477 (GKSTDMWIERTADISWEGDAEITGSSERVDVRLDDDGNFQLMNDPGAPWKIWMLRMA) lie on the Cytoplasmic side of the membrane. Residues 1428 to 1467 (IERTADISWEGDAEITGSSERVDVRLDDDGNFQLMNDPGA) form an interacts with and activates NS3 protease region. Positions 1478 to 1498 (CLAISAYTPWAILPSVVGFWI) form an intramembrane region, helical. At 1499 to 2174 (TLQYTKRGGV…RMALEELPDA (676 aa)) the chain is on the cytoplasmic side. The Peptidase S7 domain maps to 1506-1683 (GGVLWDTPSP…ERMDEPVPAG (178 aa)). Active-site charge relay system; for serine protease NS3 activity residues include His1556, Asp1580, and Ser1640. The Helicase ATP-binding domain maps to 1686 to 1842 (PEMLRKKQIT…ESNAPISDLQ (157 aa)). An important for RNA-binding region spans residues 1690-1693 (RKKQ). 1699–1706 (LHPGAGKT) contributes to the ATP binding site. Residues 1790–1793 (DEAH) carry the DEAH box motif. A Helicase C-terminal domain is found at 1853-2018 (GYEWITEYIG…GLIAQFYQPE (166 aa)). Residue Lys1894 is modified to N6-acetyllysine; by host. A regulates the ATPase activity of NS3 helicase region spans residues 2169 to 2173 (EELPD). A helical transmembrane segment spans residues 2175–2195 (LQTIALIALLSVMTMGVFFLL). The Lumenal segment spans residues 2196-2200 (MQRKG). The segment at residues 2201–2221 (IGKIGLGGVVLGAATFFCWMA) is an intramembrane region (helical). A topological domain (lumenal) is located at residue Glu2222. A helical membrane pass occupies residues 2223–2243 (VPGTKIAGMLLLSLLLMIVLI). The Cytoplasmic segment spans residues 2244–2258 (PEPEKQRSQTDNQLA). The helical transmembrane segment at 2259–2273 (VFLICVLTLVGAVAA) threads the bilayer. The Lumenal portion of the chain corresponds to 2274-2312 (NEMGWLDKTKSDISGLFGQRIETKENFSIGEFLLDLRPA). An intramembrane region (helical) is located at residues 2313 to 2333 (TAWSLYAVTTAVLTPLLKHLI). The Lumenal portion of the chain corresponds to 2334–2380 (TSDYITTSLTSINVQASALFTLARGFPFVDVGVSALLLAAGCWGQVT). Residues 2381–2401 (LTVTVTSATLLFCHYAYMVPG) traverse the membrane as a helical segment. Topologically, residues 2402–2444 (WQAEAMRSAQRRTAAGIMKNAVVDGIVATDVPELERTTPIMQK) are cytoplasmic. A helical membrane pass occupies residues 2445–2465 (KVGQVMLILVSLAALVVNPSV). The Lumenal portion of the chain corresponds to 2466–2470 (KTVRE). Residues 2471-2491 (AGILITAAAVTLWENGASSVW) traverse the membrane as a helical segment. Residues 2492-3433 (NATTAIGLCH…DTTLVEDTVL (942 aa)) lie on the Cytoplasmic side of the membrane. An mRNA cap 0-1 NS5-type MT domain is found at 2529 to 2794 (GGAKGRTLGE…DVNLGSGTRA (266 aa)). Ser2584 is an S-adenosyl-L-methionine binding site. The residue at position 2584 (Ser2584) is a Phosphoserine. Catalysis depends on Lys2589, which acts as the For 2'-O-MTase activity. Gly2614, Trp2615, Thr2632, Lys2633, Asp2659, and Val2660 together coordinate S-adenosyl-L-methionine. The active-site For 2'-O-MTase activity is the Asp2674. Residue Ile2675 coordinates S-adenosyl-L-methionine. Residues Lys2710 and Glu2746 each act as for 2'-O-MTase activity in the active site. S-adenosyl-L-methionine is bound at residue Tyr2748. Positions 2917–2919 (REK) match the Nuclear localization signal motif. Residues Glu2968, His2972, Cys2977, and Cys2980 each contribute to the Zn(2+) site. The 153-residue stretch at 3058 to 3210 (GRIYADDTAG…KPLDDRFATS (153 aa)) folds into the RdRp catalytic domain. His3245, Cys3261, and Cys3380 together coordinate Zn(2+). The PDZ-binding motif lies at 3431-3433 (TVL).

In the N-terminal section; belongs to the class I-like SAM-binding methyltransferase superfamily. mRNA cap 0-1 NS5-type methyltransferase family. As to quaternary structure, homodimer; further assembles as a homotetramer. Interacts (via N-terminus) with host EXOC1 (via C-terminus); this interaction results in EXOC1 degradation through the proteasome degradation pathway. Forms heterodimers with envelope protein E in the endoplasmic reticulum and Golgi. In terms of assembly, homodimer; in the endoplasmic reticulum and Golgi. Interacts with protein prM. Interacts with non-structural protein 1. As to quaternary structure, homodimer; Homohexamer when secreted. Interacts with envelope protein E. NS1 interacts with NS4B. Interacts with host complement protein CFH; this interaction leads to the degradation of C3. Interacts (via N-terminus) with serine protease NS3. In terms of assembly, forms a heterodimer with serine protease NS3. May form homooligomers. As to quaternary structure, forms a heterodimer with NS2B. Interacts with non-structural protein 2A (via N-terminus). Interacts with NS4B. Interacts with unphosphorylated RNA-directed RNA polymerase NS5; this interaction stimulates RNA-directed RNA polymerase NS5 guanylyltransferase activity. Interacts with Serine protease/Helicase NS3. Interacts with NS1. In terms of assembly, homodimer. Interacts with host STAT2; this interaction inhibits the phosphorylation of the latter, and, when all viral proteins are present (polyprotein), targets STAT2 for degradation. Interacts with serine protease NS3. In terms of processing, specific enzymatic cleavages in vivo yield mature proteins. Cleavages in the lumen of endoplasmic reticulum are performed by host signal peptidase, whereas cleavages in the cytoplasmic side are performed by serine protease NS3. Signal cleavage at the 2K-4B site requires a prior NS3 protease-mediated cleavage at the 4A-2K site. Cleaved in post-Golgi vesicles by a host furin, releasing the mature small envelope protein M, and peptide pr. This cleavage is incomplete as up to 30% of viral particles still carry uncleaved prM. Post-translationally, N-glycosylated. In terms of processing, N-glycosylated. The excreted form is glycosylated and this is required for efficient secretion of the protein from infected cells. Acetylated by host KAT5. Acetylation modulates NS3 RNA-binding and unwinding activities and plays an important positive role for viral replication. Post-translationally, phosphorylated on serines residues. This phosphorylation may trigger NS5 nuclear localization.

The protein localises to the virion. It localises to the host nucleus. The protein resides in the host cytoplasm. Its subcellular location is the host perinuclear region. It is found in the secreted. The protein localises to the virion membrane. It localises to the host endoplasmic reticulum membrane. It carries out the reaction Selective hydrolysis of -Xaa-Xaa-|-Yaa- bonds in which each of the Xaa can be either Arg or Lys and Yaa can be either Ser or Ala.. The enzyme catalyses RNA(n) + a ribonucleoside 5'-triphosphate = RNA(n+1) + diphosphate. The catalysed reaction is a ribonucleoside 5'-triphosphate + H2O = a ribonucleoside 5'-diphosphate + phosphate + H(+). It catalyses the reaction ATP + H2O = ADP + phosphate + H(+). It carries out the reaction a 5'-end (5'-triphosphoguanosine)-ribonucleoside in mRNA + S-adenosyl-L-methionine = a 5'-end (N(7)-methyl 5'-triphosphoguanosine)-ribonucleoside in mRNA + S-adenosyl-L-homocysteine. The enzyme catalyses a 5'-end (N(7)-methyl 5'-triphosphoguanosine)-ribonucleoside in mRNA + S-adenosyl-L-methionine = a 5'-end (N(7)-methyl 5'-triphosphoguanosine)-(2'-O-methyl-ribonucleoside) in mRNA + S-adenosyl-L-homocysteine + H(+). Plays a role in virus budding by binding to the cell membrane and gathering the viral RNA into a nucleocapsid that forms the core of a mature virus particle. During virus entry, may induce genome penetration into the host cytoplasm after hemifusion induced by the surface proteins. Can migrate to the cell nucleus where it modulates host functions. Overcomes the anti-viral effects of host EXOC1 by sequestering and degrading the latter through the proteasome degradation pathway. In terms of biological role, inhibits RNA silencing by interfering with host Dicer. Its function is as follows. Prevents premature fusion activity of envelope proteins in trans-Golgi by binding to envelope protein E at pH6.0. After virion release in extracellular space, gets dissociated from E dimers. Functionally, acts as a chaperone for envelope protein E during intracellular virion assembly by masking and inactivating envelope protein E fusion peptide. prM is the only viral peptide matured by host furin in the trans-Golgi network probably to avoid catastrophic activation of the viral fusion activity in acidic Golgi compartment prior to virion release. prM-E cleavage is inefficient, and many virions are only partially matured. These uncleaved prM would play a role in immune evasion. May play a role in virus budding. Exerts cytotoxic effects by activating a mitochondrial apoptotic pathway through M ectodomain. May display a viroporin activity. In terms of biological role, binds to host cell surface receptor and mediates fusion between viral and cellular membranes. Envelope protein is synthesized in the endoplasmic reticulum in the form of heterodimer with protein prM. They play a role in virion budding in the ER, and the newly formed immature particle is covered with 60 spikes composed of heterodimer between precursor prM and envelope protein E. The virion is transported to the Golgi apparatus where the low pH causes dissociation of PrM-E heterodimers and formation of E homodimers. prM-E cleavage is inefficient, and many virions are only partially matured. These uncleaved prM would play a role in immune evasion. Its function is as follows. Involved in immune evasion, pathogenesis and viral replication. Once cleaved off the polyprotein, is targeted to three destinations: the viral replication cycle, the plasma membrane and the extracellular compartment. Essential for viral replication. Required for formation of the replication complex and recruitment of other non-structural proteins to the ER-derived membrane structures. Excreted as a hexameric lipoparticle that plays a role against host immune response. Antagonizing the complement function. Binds to the host macrophages and dendritic cells. Inhibits signal transduction originating from Toll-like receptor 3 (TLR3). Functionally, component of the viral RNA replication complex that functions in virion assembly and antagonizes the host alpha/beta interferon antiviral response. Inhibits STAT2 translocation in the nucleus after IFN-alpha treatment. Required cofactor for the serine protease function of NS3. May have membrane-destabilizing activity and form viroporins. Inhibits STAT2 translocation in the nucleus after IFN-alpha treatment. In terms of biological role, displays three enzymatic activities: serine protease, NTPase and RNA helicase. NS3 serine protease, in association with NS2B, performs its autocleavage and cleaves the polyprotein at dibasic sites in the cytoplasm: C-prM, NS2A-NS2B, NS2B-NS3, NS3-NS4A, NS4A-2K and NS4B-NS5. NS3 RNA helicase binds RNA and unwinds dsRNA in the 3' to 5' direction. NS3 supports the separation of RNA daughter and template strands during viral replication. The helicase part is involved in the inhibition of phosphorylation of host STAT1, and thereby inhibition of host type-I IFN signaling. In addition, NS3 assists the initiation of replication by unwinding the RNA secondary structure in the 3' non-translated region (NTR). Inhibits STAT2 translocation in the nucleus after IFN-alpha treatment. Its function is as follows. Regulates the ATPase activity of the NS3 helicase activity. NS4A allows NS3 helicase to conserve energy during unwinding. Induces host ER membrane rearrangements to provide a compartment where viral replication can take part. Inhibits STAT2 translocation in the nucleus after IFN-alpha treatment. Functionally, functions as a signal peptide for NS4B and is required for the interferon antagonism activity of the latter. Induces the formation of ER-derived membrane vesicles where the viral replication takes place. Inhibits interferon (IFN)-induced host STAT1 phosphorylation and nuclear translocation, thereby preventing the establishment of cellular antiviral state by blocking the IFN-alpha/beta pathway. Inhibits STAT2 translocation in the nucleus after IFN-alpha treatment. In terms of biological role, replicates the viral (+) and (-) genome, and performs the capping of genomes in the cytoplasm. NS5 methylates viral RNA cap at guanine N-7 and ribose 2'-O positions. Besides its role in genome replication, also prevents the establishment of cellular antiviral state by blocking the interferon-alpha/beta (IFN-alpha/beta) signaling pathway. Inhibits host JAK1 and TYK2 phosphorylation, thereby preventing activation of JAK-STAT signaling pathway. May transcriptionally regulate host genes involved in antiviral response when localized in the nucleus. This is Genome polyprotein from Ciconiiformes (storks and others).